The primary structure comprises 238 residues: MRIDNRELNQLRSISFERHYTKHAEGSVLVSFGDTKVLCTASVESGVPRWLKGKGKGWITAEYGMLPRATNTRNQREAARGKQSGRTQEIQRLIGRSLRAMIDLSKLGENTIYLDCDVLQADGGTRTASVTGAAIALIDALESIQKTKKLKADPLIGLVAAVSVGMKDGKAYLDLNYEEDASCDTDLNVVMTQKGEFIELQGTAEEKPFTRAQADDMLILAEKGIAELIAMQKTALGW.

Phosphate is bound by residues R86 and 124-126; that span reads GTR.

The protein belongs to the RNase PH family. As to quaternary structure, homohexameric ring arranged as a trimer of dimers.

It carries out the reaction tRNA(n+1) + phosphate = tRNA(n) + a ribonucleoside 5'-diphosphate. Its function is as follows. Phosphorolytic 3'-5' exoribonuclease that plays an important role in tRNA 3'-end maturation. Removes nucleotide residues following the 3'-CCA terminus of tRNAs; can also add nucleotides to the ends of RNA molecules by using nucleoside diphosphates as substrates, but this may not be physiologically important. Probably plays a role in initiation of 16S rRNA degradation (leading to ribosome degradation) during starvation. The polypeptide is Ribonuclease PH (Psychrobacter cryohalolentis (strain ATCC BAA-1226 / DSM 17306 / VKM B-2378 / K5)).